Here is a 251-residue protein sequence, read N- to C-terminus: Mycofactocin precursor peptide peptidase (251 aa).

A divalent metal cation contacts are provided by E38, H40, D49, H128, and E167.

It belongs to the creatininase superfamily. As to quaternary structure, homooctamer. Requires Fe(2+) as cofactor. The cofactor is Zn(2+).

The catalysed reaction is [mycofactocin precursor peptide]-C-terminal glycyl-N-{5-[(4-hydroxyphenyl)methyl]-4,4-dimethyl-2-oxopyrrolidin-3-yl}acetamide + H2O = [mycofactocin precursor peptide]-C-terminal glycine + 3-amino-5-[(4-hydroxyphenyl)methyl]-4,4-dimethyl-2-pyrrolidin-2-one. In terms of biological role, peptidase involved in the biosynthesis of the enzyme cofactor mycofactocin (MFT). Catalyzes cleavage of the MftC-modified MftA peptide to liberate its final two residues, which consist of a cross-linked valine-decarboxylated tyrosine dipeptide (named 3-amino-5-[(4-hydroxyphenyl)methyl]-4,4-dimethyl-2-pyrrolidin-2-one or ADHP). This Mycobacterium tuberculosis (strain CDC 1551 / Oshkosh) protein is Mycofactocin precursor peptide peptidase (mftE).